Consider the following 506-residue polypeptide: Cobyric acid synthase (506 aa).

The region spanning 251–448 (DITIAIVQLP…LHGLFDSDAF (198 aa)) is the GATase cobBQ-type domain. The Nucleophile role is filled by Cys332. His440 is an active-site residue.

It belongs to the CobB/CobQ family. CobQ subfamily.

The protein operates within cofactor biosynthesis; adenosylcobalamin biosynthesis. In terms of biological role, catalyzes amidations at positions B, D, E, and G on adenosylcobyrinic A,C-diamide. NH(2) groups are provided by glutamine, and one molecule of ATP is hydrogenolyzed for each amidation. The chain is Cobyric acid synthase from Salmonella dublin (strain CT_02021853).